The chain runs to 500 residues: Ferulic acid decarboxylase 1 (500 aa).

Positions 168, 191, and 233 each coordinate Mn(2+). Prenylated FMN-binding positions include 168 to 173 (NWSIAR), 190 to 191 (QH), and E233. Residue E282 is the Proton donor of the active site. A prenylated FMN-binding site is contributed by K391.

It belongs to the UbiD family. UbiD-like/FDC subfamily. As to quaternary structure, homodimer. May form higher order oligomers. Mn(2+) serves as cofactor. Requires prenylated FMN as cofactor.

The protein localises to the cytoplasm. It carries out the reaction (E)-4-coumarate + H(+) = 4-vinylphenol + CO2. The enzyme catalyses (E)-cinnamate + H(+) = styrene + CO2. It catalyses the reaction (E)-ferulate + H(+) = 2-methoxy-4-vinylphenol + CO2. Its function is as follows. Catalyzes the reversible decarboxylation of aromatic carboxylic acids like ferulic acid, p-coumaric acid or cinnamic acid, producing the corresponding vinyl derivatives 4-vinylphenol, 4-vinylguaiacol, and styrene, respectively, which play the role of aroma metabolites. This Aspergillus niger (strain ATCC MYA-4892 / CBS 513.88 / FGSC A1513) protein is Ferulic acid decarboxylase 1.